Reading from the N-terminus, the 148-residue chain is Putative fusion protein (148 aa).

The disordered stretch occupies residues 1 to 34 (MDRALSTFPGDDDETNERNINHREKTSGEHGHYE). The segment covering 16–34 (NERNINHREKTSGEHGHYE) has biased composition (basic and acidic residues).

Belongs to the poxviruses fusion protein family. In terms of assembly, homotrimer, covalently linked.

The protein localises to the virion membrane. The sequence is that of Putative fusion protein from Sheeppox virus (strain KS-1) (SPPV).